The following is a 388-amino-acid chain: Processive diacylglycerol beta-glucosyltransferase (388 aa).

Belongs to the glycosyltransferase 28 family. UgtP subfamily.

The protein resides in the cell membrane. It catalyses the reaction a 1,2-diacyl-3-O-(beta-D-glucopyranosyl)-sn-glycerol + UDP-alpha-D-glucose = a 1,2-diacyl-3-O-(beta-D-Glc-(1-&gt;6)-beta-D-Glc)-sn-glycerol + UDP + H(+). The catalysed reaction is a 1,2-diacyl-3-O-(beta-D-Glc-(1-&gt;6)-beta-D-Glc)-sn-glycerol + UDP-alpha-D-glucose = a 1,2-diacyl-3-O-(beta-D-Glc-(1-&gt;6)-beta-D-Glc-(1-&gt;6)-beta-D-Glc)-sn-glycerol + UDP + H(+). It carries out the reaction a 1,2-diacyl-sn-glycerol + UDP-alpha-D-glucose = a 1,2-diacyl-3-O-(beta-D-glucopyranosyl)-sn-glycerol + UDP + H(+). It functions in the pathway glycolipid metabolism; diglucosyl-diacylglycerol biosynthesis. Processive glucosyltransferase involved in the biosynthesis of both the bilayer- and non-bilayer-forming membrane glucolipids. Is able to successively transfer up to three glucosyl residues to diacylglycerol (DAG), thereby catalyzing the formation of beta-monoglucosyl-DAG (3-O-(beta-D-glucopyranosyl)-1,2-diacyl-sn-glycerol), beta-diglucosyl-DAG (3-O-(beta-D-glucopyranosyl-beta-(1-&gt;6)-D-glucopyranosyl)-1,2-diacyl-sn-glycerol) and beta-triglucosyl-DAG (3-O-(beta-D-glucopyranosyl-beta-(1-&gt;6)-D-glucopyranosyl-beta-(1-&gt;6)-D-glucopyranosyl)-1,2-diacyl-sn-glycerol). Beta-diglucosyl-DAG is the predominant glycolipid found in Bacillales and is also used as a membrane anchor for lipoteichoic acid (LTA). This chain is Processive diacylglycerol beta-glucosyltransferase, found in Bacillus cereus (strain ATCC 14579 / DSM 31 / CCUG 7414 / JCM 2152 / NBRC 15305 / NCIMB 9373 / NCTC 2599 / NRRL B-3711).